Consider the following 435-residue polypeptide: MKTLTTYAKYFTPISKIAFLFCFLMGNIAEATIKRAKFTNGFSGINRIITYTFEGSSTMIASATTPEQILFSKARDNTVIDPSYSNNVQQWSVFNNWIDTTVSGDTGYSFAGFSCVSNPCAQMQLPLRFYLDSAILEATSMRSADNQVIFKIRQHPELGVSFQLGMKKGIEDVKWLSNLQQEDFLLTTLQIYFGDAADISFKVRAKLHLLKLPTENTELPTMKLNLGQIKLQSWGINNWGRTKVSYRVQDVGSLNVQLKTPKIYFIQQQRQCILNSTYKKIPVTLKSVKKREFETNTEIEGGQFKLRVNCEDTTYNKFNGKWLFPVVKVTFRGEDGTMNDGTNELLRTQTGTGQATGVSLKIKRDSGNGDSVKYGLDSANMNNHGQFELKKQPSPAGGDQSAEETFKVYYVKDTTRGALTEGKVKAAATFTMSYQ.

A signal peptide spans 1 to 31 (MKTLTTYAKYFTPISKIAFLFCFLMGNIAEA).

Belongs to the fimbrial protein family.

The protein localises to the fimbrium. In terms of biological role, may be a minor structural protein required for pilus biogenesis. May be the adhesive component in the pili. This Haemophilus influenzae protein is Minor fimbrial subunit HifE (hifE).